The sequence spans 303 residues: Ribonuclease Z (303 aa).

Residues H61, H63, D65, H66, H139, D207, and H266 each contribute to the Zn(2+) site. D65 (proton acceptor) is an active-site residue.

This sequence belongs to the RNase Z family. In terms of assembly, homodimer. Zn(2+) serves as cofactor.

It carries out the reaction Endonucleolytic cleavage of RNA, removing extra 3' nucleotides from tRNA precursor, generating 3' termini of tRNAs. A 3'-hydroxy group is left at the tRNA terminus and a 5'-phosphoryl group is left at the trailer molecule.. Its function is as follows. Zinc phosphodiesterase, which displays some tRNA 3'-processing endonuclease activity. Probably involved in tRNA maturation, by removing a 3'-trailer from precursor tRNA. This Clostridium kluyveri (strain ATCC 8527 / DSM 555 / NBRC 12016 / NCIMB 10680 / K1) protein is Ribonuclease Z.